Reading from the N-terminus, the 93-residue chain is Defensin alpha 4 (93 aa).

The N-terminal stretch at 1 to 19 is a signal peptide; the sequence is MRTLTLLITLLLLALHTQA. Positions 20–62 are excised as a propeptide; sequence ESPQERAKAAPDQDMVMEDQDIFISFGGYKGTVLQDAVVKAGQ. 3 cysteine pairs are disulfide-bonded: Cys64/Cys92, Cys66/Cys81, and Cys71/Cys91.

Belongs to the alpha-defensin family. In terms of tissue distribution, expressed in neutrophils (at protein level). Highest expression in bone marrow and to a much lesser extent in small intestine.

It is found in the secreted. Host-defense peptide that has antimicrobial activity against Gram-positive and Gram-negative bacteria and fungi (in vitro). Exhibits activity against E.coli, A.calcoaceticus, S,aureus and C.albicans. The chain is Defensin alpha 4 from Rattus norvegicus (Rat).